The primary structure comprises 139 residues: Large ribosomal subunit protein uL16 (139 aa).

The protein belongs to the universal ribosomal protein uL16 family. In terms of assembly, part of the 50S ribosomal subunit.

Functionally, binds 23S rRNA and is also seen to make contacts with the A and possibly P site tRNAs. The chain is Large ribosomal subunit protein uL16 (rplP) from Neorickettsia sennetsu (strain ATCC VR-367 / Miyayama) (Ehrlichia sennetsu).